We begin with the raw amino-acid sequence, 229 residues long: Small ribosomal subunit protein uS3 (229 aa).

The region spanning 17–85 (VKEWIKDEVR…NPQVSVDEVE (69 aa)) is the KH type-2 domain. The disordered stretch occupies residues 202-229 (LRGESGEDEGDKGDEQGGEAQEAEGAGA). The span at 219-229 (GEAQEAEGAGA) shows a compositional bias: low complexity.

This sequence belongs to the universal ribosomal protein uS3 family. As to quaternary structure, part of the 30S ribosomal subunit.

Its function is as follows. Binds the lower part of the 30S subunit head. The polypeptide is Small ribosomal subunit protein uS3 (Archaeoglobus fulgidus (strain ATCC 49558 / DSM 4304 / JCM 9628 / NBRC 100126 / VC-16)).